The chain runs to 102 residues: Putative ubiquitin-like protein FUBI-like protein ENSP00000310146 (102 aa).

The Ubiquitin-like domain maps to 23-99; it reads LCPQVAYVRA…LEVVGRRLGV (77 aa).

The chain is Putative ubiquitin-like protein FUBI-like protein ENSP00000310146 from Homo sapiens (Human).